The primary structure comprises 347 residues: Selenide, water dikinase 2 (347 aa).

Residue selenocysteine 18 is part of the active site. Selenocysteine 18 is a non-standard amino acid (selenocysteine). Residues lysine 21 and threonine 48–aspartate 50 each bind ATP. Aspartate 51 provides a ligand contact to Mg(2+). Residues aspartate 68, aspartate 91, and glycine 138–threonine 140 each bind ATP. Aspartate 91 lines the Mg(2+) pocket. Aspartate 226 serves as a coordination point for Mg(2+).

Belongs to the selenophosphate synthase 1 family. Class I subfamily. In terms of assembly, homodimer. The cofactor is Mg(2+).

It catalyses the reaction hydrogenselenide + ATP + H2O = selenophosphate + AMP + phosphate + 2 H(+). Synthesizes selenophosphate from selenide and ATP. This Peptoclostridium acidaminophilum (Eubacterium acidaminophilum) protein is Selenide, water dikinase 2.